Consider the following 250-residue polypeptide: MLLIAGLGNPGPQYAHNRHNIGFMAADEIFRRHRFSNWQKKFQAEIADGVIDGEKVLLVKPQTFMNLSGQSIGEAMRFYKLTPADLVVIYDELDLVPGKLRIKTGGGSGGHNGIKSIDAHMQSFPGGQNYRRMRLGIGHPGAKELVHNYVLGDFAKADNEWLDTLMGAVADNVAMLARREDNSFMNRIALAMGDGNQRPGGVKTDPAQLEKAPPKAQSHIRQARQNQKKPNIPESGPMAEMLKKLLGKKD.

Tyrosine 14 is a tRNA binding site. The active-site Proton acceptor is the histidine 19. TRNA-binding residues include phenylalanine 64, asparagine 66, and asparagine 112. Residues 192–250 (MGDGNQRPGGVKTDPAQLEKAPPKAQSHIRQARQNQKKPNIPESGPMAEMLKKLLGKKD) are disordered. Over residues 219-229 (HIRQARQNQKK) the composition is skewed to polar residues. Over residues 241-250 (MLKKLLGKKD) the composition is skewed to basic and acidic residues.

Belongs to the PTH family. Monomer.

It is found in the cytoplasm. It catalyses the reaction an N-acyl-L-alpha-aminoacyl-tRNA + H2O = an N-acyl-L-amino acid + a tRNA + H(+). In terms of biological role, hydrolyzes ribosome-free peptidyl-tRNAs (with 1 or more amino acids incorporated), which drop off the ribosome during protein synthesis, or as a result of ribosome stalling. Catalyzes the release of premature peptidyl moieties from peptidyl-tRNA molecules trapped in stalled 50S ribosomal subunits, and thus maintains levels of free tRNAs and 50S ribosomes. This is Peptidyl-tRNA hydrolase from Brucella canis (strain ATCC 23365 / NCTC 10854 / RM-666).